Here is a 393-residue protein sequence, read N- to C-terminus: Pre-mRNA-splicing regulator WTAP (393 aa).

The tract at residues 240–393 (QQQIQTSGNR…SSVNVQGSVL (154 aa)) is disordered. Residues 254-267 (ESKDEGETSGKDCG) are compositionally biased toward basic and acidic residues. Polar residues predominate over residues 272–286 (GPSNGGSSHQRTHSS). A compositionally biased stretch (basic and acidic residues) spans 310–319 (LPNHSEERTS). Residues 320–353 (RGGSSYMNQLSTGYESVDSPTGSENSLTHQSNDT) are compositionally biased toward polar residues. Basic and acidic residues predominate over residues 354 to 365 (DSNHDSQEEKPV). Polar residues predominate over residues 369 to 393 (GNRTVSSRHLQNGLDSSVNVQGSVL).

This sequence belongs to the fl(2)d family. Component of the WMM complex, a N6-methyltransferase complex composed of a catalytic subcomplex, named MAC, and of an associated subcomplex, named MACOM. Component of the MACOM subcomplex.

Its subcellular location is the nucleus speckle. The protein localises to the nucleus. The protein resides in the nucleoplasm. In terms of biological role, associated component of the WMM complex, a complex that mediates N6-methyladenosine (m6A) methylation of RNAs, a modification that plays a role in the efficiency of mRNA splicing and RNA processing. The sequence is that of Pre-mRNA-splicing regulator WTAP from Xenopus tropicalis (Western clawed frog).